A 602-amino-acid chain; its full sequence is Threonine--tRNA ligase (602 aa).

The interval 208–499 is catalytic; that stretch reads DHRKLGTELK…LTEHCAGEFP (292 aa). Zn(2+) is bound by residues C300, H351, and H476.

The protein belongs to the class-II aminoacyl-tRNA synthetase family. In terms of assembly, homodimer. It depends on Zn(2+) as a cofactor.

It localises to the cytoplasm. The enzyme catalyses tRNA(Thr) + L-threonine + ATP = L-threonyl-tRNA(Thr) + AMP + diphosphate + H(+). Functionally, catalyzes the attachment of threonine to tRNA(Thr) in a two-step reaction: L-threonine is first activated by ATP to form Thr-AMP and then transferred to the acceptor end of tRNA(Thr). Also edits incorrectly charged L-seryl-tRNA(Thr). The chain is Threonine--tRNA ligase from Campylobacter jejuni subsp. jejuni serotype O:23/36 (strain 81-176).